A 451-amino-acid polypeptide reads, in one-letter code: Protein NINJA homolog 1 (451 aa).

Disordered regions lie at residues 1–223, 321–346, and 427–451; these read MDDE…QGNP, ISQA…DDKK, and DAPG…SAQN. Over residues 23–35 the composition is skewed to basic and acidic residues; the sequence is KARDAPLEPKAEP. Polar residues-rich tracts occupy residues 38-49, 86-103, and 143-153; these read EESSSKGVSQTP, PGSS…QKPV, and ISISTDDGSTG. A compositionally biased stretch (acidic residues) spans 154–163; the sequence is ENEDVAESEA. Over residues 207-216 the composition is skewed to low complexity; that stretch reads SFSGSESSSG.

The protein belongs to the Ninja family. As to quaternary structure, interacts with TIFY10C/JAZ8. Interacts with TIFY11A/JAZ9.

Its subcellular location is the nucleus. In Oryza sativa subsp. japonica (Rice), this protein is Protein NINJA homolog 1.